The sequence spans 474 residues: Proline--tRNA ligase (474 aa).

It belongs to the class-II aminoacyl-tRNA synthetase family. ProS type 3 subfamily. As to quaternary structure, homodimer.

The protein localises to the cytoplasm. The enzyme catalyses tRNA(Pro) + L-proline + ATP = L-prolyl-tRNA(Pro) + AMP + diphosphate. Functionally, catalyzes the attachment of proline to tRNA(Pro) in a two-step reaction: proline is first activated by ATP to form Pro-AMP and then transferred to the acceptor end of tRNA(Pro). This Mycoplasma mycoides subsp. mycoides SC (strain CCUG 32753 / NCTC 10114 / PG1) protein is Proline--tRNA ligase.